Reading from the N-terminus, the 343-residue chain is Heat-inducible transcription repressor HrcA (343 aa).

Belongs to the HrcA family.

Negative regulator of class I heat shock genes (grpE-dnaK-dnaJ and groELS operons). Prevents heat-shock induction of these operons. The protein is Heat-inducible transcription repressor HrcA of Mycolicibacterium vanbaalenii (strain DSM 7251 / JCM 13017 / BCRC 16820 / KCTC 9966 / NRRL B-24157 / PYR-1) (Mycobacterium vanbaalenii).